We begin with the raw amino-acid sequence, 380 residues long: XK-related protein 9 (380 aa).

The next 8 helical transmembrane spans lie at 10 to 30 (LLSA…AALV), 39 to 59 (VVCA…TQVF), 81 to 101 (LPVV…GIFI), 167 to 187 (CSLV…WALV), 228 to 248 (ALLL…WLLG), 264 to 284 (SLEF…FFNV), 294 to 314 (ITYY…LFVL), and 329 to 349 (TLMA…YLLL).

The protein belongs to the XK family.

It is found in the cell membrane. It catalyses the reaction a 1,2-diacyl-sn-glycero-3-phospho-L-serine(in) = a 1,2-diacyl-sn-glycero-3-phospho-L-serine(out). Its function is as follows. Phospholipid scramblase that promotes phosphatidylserine exposure on apoptotic cell surface. Phosphatidylserine is a specific marker only present at the surface of apoptotic cells and acts as a specific signal for engulfment. The polypeptide is XK-related protein 9 (Tetraodon nigroviridis (Spotted green pufferfish)).